We begin with the raw amino-acid sequence, 139 residues long: Peptide methionine sulfoxide reductase B5 (139 aa).

Ala2 is subject to N-acetylalanine. Positions 12-133 (EEEWRAVLSP…NSVSISFNPA (122 aa)) constitute a MsrB domain. Zn(2+)-binding residues include Cys51, Cys54, Cys97, and Cys100. A disulfide bond links Cys69 and Cys122. The Nucleophile role is filled by Cys122.

Belongs to the MsrB Met sulfoxide reductase family. Zn(2+) is required as a cofactor.

Its subcellular location is the cytoplasm. It is found in the cytosol. The catalysed reaction is L-methionyl-[protein] + [thioredoxin]-disulfide + H2O = L-methionyl-(R)-S-oxide-[protein] + [thioredoxin]-dithiol. Catalyzes the reduction of methionine sulfoxide (MetSO) to methionine in proteins. Plays a protective role against oxidative stress by restoring activity to proteins that have been inactivated by methionine oxidation. MSRB family specifically reduces the MetSO R-enantiomer. This Arabidopsis thaliana (Mouse-ear cress) protein is Peptide methionine sulfoxide reductase B5 (MSRB5).